The sequence spans 131 residues: Transcription antitermination protein NusB (131 aa).

The protein belongs to the NusB family.

In terms of biological role, involved in transcription antitermination. Required for transcription of ribosomal RNA (rRNA) genes. Binds specifically to the boxA antiterminator sequence of the ribosomal RNA (rrn) operons. In Agathobacter rectalis (strain ATCC 33656 / DSM 3377 / JCM 17463 / KCTC 5835 / VPI 0990) (Eubacterium rectale), this protein is Transcription antitermination protein NusB.